Here is a 90-residue protein sequence, read N- to C-terminus: Acylphosphatase (90 aa).

Positions 5–90 (CLKAWVTGRV…DPPPGTFELG (86 aa)) constitute an Acylphosphatase-like domain. Active-site residues include R20 and N38.

This sequence belongs to the acylphosphatase family.

It catalyses the reaction an acyl phosphate + H2O = a carboxylate + phosphate + H(+). This is Acylphosphatase (acyP) from Chromohalobacter salexigens (strain ATCC BAA-138 / DSM 3043 / CIP 106854 / NCIMB 13768 / 1H11).